The chain runs to 350 residues: Ferrochelatase (350 aa).

Fe cation contacts are provided by His-220 and Glu-301.

The protein belongs to the ferrochelatase family.

The protein resides in the cytoplasm. It carries out the reaction heme b + 2 H(+) = protoporphyrin IX + Fe(2+). Its pathway is porphyrin-containing compound metabolism; protoheme biosynthesis; protoheme from protoporphyrin-IX: step 1/1. Functionally, catalyzes the ferrous insertion into protoporphyrin IX. The polypeptide is Ferrochelatase (Brucella anthropi (strain ATCC 49188 / DSM 6882 / CCUG 24695 / JCM 21032 / LMG 3331 / NBRC 15819 / NCTC 12168 / Alc 37) (Ochrobactrum anthropi)).